The primary structure comprises 183 residues: Caltractin ICL1c (183 aa).

The tract at residues 1–30 is disordered; the sequence is MARRGQQPPPQQQQAPPTQKNQAGKFNPAE. 4 consecutive EF-hand domains span residues 39 to 74, 75 to 110, 112 to 147, and 148 to 183; these read EEVL…LGFE, AKNQ…RISE, DSKA…LGET, and MDDS…KTFA. Ca(2+) contacts are provided by Asp52, Asp54, Thr56, Ser58, Glu63, Asp88, Asp90, Ser92, Gln94, and Glu99.

Belongs to the centrin family. Monomer.

The protein resides in the cytoplasm. Its subcellular location is the cytoskeleton. In terms of biological role, plays a fundamental role in microtubule organizing center structure and function. Component of the infraciliary lattice (ICL) and the ciliary basal bodies. The chain is Caltractin ICL1c (Icl1c) from Paramecium tetraurelia.